We begin with the raw amino-acid sequence, 105 residues long: Host transcription reprogramming factor 7 (105 aa).

The first 19 residues, 1-19 (MKTKTIFQLVALFAIGATA), serve as a signal peptide directing secretion. The segment at 69–95 (YWCRIGNCNAAFKSLAARCRHEKTAVH) adopts a C2H2-type zinc-finger fold.

It localises to the secreted. Its subcellular location is the host nucleus. Its function is as follows. Probable secreted effector that translocates into the nuclei of host cells to reprogram the expression of targeted genes by binding on effector binding elements in rice. In Pyricularia oryzae (strain 70-15 / ATCC MYA-4617 / FGSC 8958) (Rice blast fungus), this protein is Host transcription reprogramming factor 7.